Reading from the N-terminus, the 544-residue chain is MTDIQIAQAAKKENIVEIAKKLGLTEDDIEQYGKYKAKVNLDVLQKNKRPNGKLILVTAITPTPAGEGKSTVTIGLTQALNKMGKLSAAAIREPSLGPVFGMKGGAAGGGYAQVVPMEDINLHFTGDMHAIGIAHNLISACIDNHINSGNALGIDVTKITWKRVVDMNDRALRNIVIGLGGKANGYPRQDSFQITVGSEIMAILCLSNSITELKEKIKNIVIGTSVTGKLIKVGDFHIEGAVAALLKDAIKPNLVQTLENTPVFIHGGPFANIAHGCNSILATKMALKLTDYVVTEAGFAADLGAEKFIDIKCRLGGLKPDCAVIVATVRALEHHGKGDLKAGLENLDKHIDNIKNKYKLPLVVAINKFITDTDEQINMIEKFCNERGAEVSLCEVWAKGGEGGIDLAEKVLKAIDNNKTEFDYFYDINLTIKEKIEKICKEIYGADGVIFAPATKKVFDVIEAEGLNKLPVCMSKTQKSISDNPALLGKPTGFKVTINDLRLAVGAGFVIAMAGDIIDMPGLPKKPSAEVIDIDENGVISGLF.

63 to 70 (TPAGEGKS) contributes to the ATP binding site.

The protein belongs to the formate--tetrahydrofolate ligase family.

The catalysed reaction is (6S)-5,6,7,8-tetrahydrofolate + formate + ATP = (6R)-10-formyltetrahydrofolate + ADP + phosphate. It participates in one-carbon metabolism; tetrahydrofolate interconversion. The protein is Formate--tetrahydrofolate ligase of Fusobacterium nucleatum subsp. nucleatum (strain ATCC 25586 / DSM 15643 / BCRC 10681 / CIP 101130 / JCM 8532 / KCTC 2640 / LMG 13131 / VPI 4355).